The sequence spans 524 residues: Sterol O-acyltransferase 2 (524 aa).

The interval 1-31 (MEPKAPQLRRRERQGEEQENGACGEGNTRTH) is disordered. Residues 1-118 (MEPKAPQLRR…LDELMGVQHF (118 aa)) are Cytoplasmic-facing. Histidine 117 is a binding site for cholesterol. The chain crosses the membrane as a helical span at residues 119 to 140 (RTIYHMFIAGLCVLIISTLAID). Residues 141–160 (FIDEGRLMLEFDLLLFSFGQ) are Lumenal-facing. Residues 161–186 (LPLALMMWVPMFLSTLLLPYQTLRLW) traverse the membrane as a helical segment. Residues 187–198 (ARPRSGGAWTLG) are Cytoplasmic-facing. The helical transmembrane segment at 199-222 (ASLGCVLLAAHAAVLCVLPVHVSV) threads the bilayer. Topologically, residues 223 to 230 (KHELPPAS) are lumenal. A helical membrane pass occupies residues 231-254 (RCVLVFEQVRFLMKSYSFLRETVP). Residues 255 to 295 (GIFCVRGGKGICTPSFSSYLYFLFCPTLIYRETYPRTPSIR) lie on the Cytoplasmic side of the membrane. Cysteine 279 carries the cysteine sulfenic acid (-SOH); alternate modification. Cysteine 279 participates in a covalent cross-link: Glycyl cysteine thioester (Cys-Gly) (interchain with G-Cter in ubiquitin); alternate. The chain crosses the membrane as a helical span at residues 296-328 (WNYVAKNFAQALGCLLYACFILGRLCVPVFANM). The Lumenal segment spans residues 329-345 (SREPFSTRALLLSILHA). Residues 346-371 (TGPGIFMLLLIFFAFLHCWLNAFAEM) traverse the membrane as a helical segment. Residues 372–419 (LRFGDRMFYRDWWNSTSFSNYYRTWNVVVHDWLYSYVYQDGLWLLGRQ) are Cytoplasmic-facing. Positions 379-385 (FYRDWWN) match the FYXDWWN motif motif. An acyl-CoA-binding residues include asparagine 391, arginine 394, asparagine 397, histidine 401, tyrosine 409, and serine 432. A helical membrane pass occupies residues 420 to 444 (GRGAAMLGVFLVSALVHEYIFCFVL). Histidine 436 is an active-site residue. Residues 445–450 (GFFYPV) are Lumenal-facing. A helical transmembrane segment spans residues 451–466 (MLILFLVVGGLLNFTM). Residues 467–472 (NDRHTG) are Cytoplasmic-facing. Residues 473-504 (PAWNILMWTFLFLGQGIQVSLYCQEWYARRHC) form a helical membrane-spanning segment. Residues 505-524 (PLPQPTFWELVTPRSWSCHP) lie on the Lumenal side of the membrane.

The protein belongs to the membrane-bound acyltransferase family. Sterol o-acyltransferase subfamily. In terms of assembly, may form homo- or heterodimers. Interacts with INSIG1; the interaction is direct and promotes association with AMFR/gp78. Post-translationally, polyubiquitinated by AMFR/gp78 at Cys-279, leading to its degradation when the lipid levels are low. Association with AMFR/gp78 is mediated via interaction with INSIG1. High concentration of cholesterol and fatty acid results in Cys-279 oxidation, preventing ubiquitination at the same site, resulting in protein stabilization. In terms of processing, oxidized at Cys-279: high concentration of cholesterol and fatty acid induce reactive oxygen species, which oxidizes Cys-279, preventing ubiquitination at the same site, and resulting in protein stabilization.

It is found in the endoplasmic reticulum membrane. The enzyme catalyses a sterol + a long-chain fatty acyl-CoA = a long-chain 3-hydroxysterol ester + CoA. The catalysed reaction is cholesterol + an acyl-CoA = a cholesterol ester + CoA. It carries out the reaction cholesterol + (9Z)-octadecenoyl-CoA = cholesteryl (9Z-octadecenoate) + CoA. It catalyses the reaction (5Z,8Z,11Z,14Z,17Z)-eicosapentaenoyl-CoA + cholesterol = (5Z,8Z,11Z,14Z,17Z-eicosapentaenoyl)-cholesterol + CoA. The enzyme catalyses (9Z,12Z,15Z)-octadecatrienoyl-CoA + cholesterol = (9Z,12Z,15Z-octadecatrienoyl)-cholesterol + CoA. The catalysed reaction is (5Z,8Z,11Z,14Z)-eicosatetraenoyl-CoA + cholesterol = cholesteryl (5Z,8Z,11Z,14Z)-eicosatetraenoate + CoA. Functionally, catalyzes the formation of fatty acid-cholesterol esters, which are less soluble in membranes than cholesterol. Plays a role in lipoprotein assembly and dietary cholesterol absorption. Utilizes oleoyl-CoA ((9Z)-octadecenoyl-CoA) and linolenoyl-CoA ((9Z,12Z,15Z)-octadecatrienoyl-CoA) as substrates. May provide cholesteryl esters for lipoprotein secretion from hepatocytes and intestinal mucosa. In Rattus norvegicus (Rat), this protein is Sterol O-acyltransferase 2.